The chain runs to 259 residues: Imidazole glycerol phosphate synthase subunit HisF (259 aa).

Active-site residues include Asp-11 and Asp-130.

The protein belongs to the HisA/HisF family. As to quaternary structure, heterodimer of HisH and HisF.

Its subcellular location is the cytoplasm. It carries out the reaction 5-[(5-phospho-1-deoxy-D-ribulos-1-ylimino)methylamino]-1-(5-phospho-beta-D-ribosyl)imidazole-4-carboxamide + L-glutamine = D-erythro-1-(imidazol-4-yl)glycerol 3-phosphate + 5-amino-1-(5-phospho-beta-D-ribosyl)imidazole-4-carboxamide + L-glutamate + H(+). It functions in the pathway amino-acid biosynthesis; L-histidine biosynthesis; L-histidine from 5-phospho-alpha-D-ribose 1-diphosphate: step 5/9. Functionally, IGPS catalyzes the conversion of PRFAR and glutamine to IGP, AICAR and glutamate. The HisF subunit catalyzes the cyclization activity that produces IGP and AICAR from PRFAR using the ammonia provided by the HisH subunit. The chain is Imidazole glycerol phosphate synthase subunit HisF from Carboxydothermus hydrogenoformans (strain ATCC BAA-161 / DSM 6008 / Z-2901).